The chain runs to 113 residues: T cell receptor alpha variable 8-6 (113 aa).

Residues 1-20 form the signal peptide; that stretch reads MLLLLVPAFQVIFTLGGTRA. In terms of domain architecture, Ig-like spans 21 to 113; sequence QSVTQLDSQV…DTAEYFCAVS (93 aa). The cysteines at positions 42 and 110 are disulfide-linked. Asparagine 43 and asparagine 87 each carry an N-linked (GlcNAc...) asparagine glycan.

Alpha-beta TR is a heterodimer composed of an alpha and beta chain; disulfide-linked. The alpha-beta TR is associated with the transmembrane signaling CD3 coreceptor proteins to form the TR-CD3 (TcR or TCR). The assembly of alpha-beta TR heterodimers with CD3 occurs in the endoplasmic reticulum where a single alpha-beta TR heterodimer associates with one CD3D-CD3E heterodimer, one CD3G-CD3E heterodimer and one CD247 homodimer forming a stable octameric structure. CD3D-CD3E and CD3G-CD3E heterodimers preferentially associate with TR alpha and TR beta chains, respectively. The association of the CD247 homodimer is the last step of TcR assembly in the endoplasmic reticulum and is required for transport to the cell surface.

The protein localises to the cell membrane. In terms of biological role, v region of the variable domain of T cell receptor (TR) alpha chain that participates in the antigen recognition. Alpha-beta T cell receptors are antigen specific receptors which are essential to the immune response and are present on the cell surface of T lymphocytes. Recognize peptide-major histocompatibility (MH) (pMH) complexes that are displayed by antigen presenting cells (APC), a prerequisite for efficient T cell adaptive immunity against pathogens. Binding of alpha-beta TR to pMH complex initiates TR-CD3 clustering on the cell surface and intracellular activation of LCK that phosphorylates the ITAM motifs of CD3G, CD3D, CD3E and CD247 enabling the recruitment of ZAP70. In turn ZAP70 phosphorylates LAT, which recruits numerous signaling molecules to form the LAT signalosome. The LAT signalosome propagates signal branching to three major signaling pathways, the calcium, the mitogen-activated protein kinase (MAPK) kinase and the nuclear factor NF-kappa-B (NF-kB) pathways, leading to the mobilization of transcription factors that are critical for gene expression and essential for T cell growth and differentiation. The T cell repertoire is generated in the thymus, by V-(D)-J rearrangement. This repertoire is then shaped by intrathymic selection events to generate a peripheral T cell pool of self-MH restricted, non-autoaggressive T cells. Post-thymic interaction of alpha-beta TR with the pMH complexes shapes TR structural and functional avidity. This chain is T cell receptor alpha variable 8-6, found in Homo sapiens (Human).